The following is a 235-amino-acid chain: Myb family transcription factor PHL12 (235 aa).

The segment covering 1-12 has biased composition (basic and acidic residues); it reads MMQSREEIRDDS. The interval 1–20 is disordered; that stretch reads MMQSREEIRDDSSSGLVLTT. Positions 20–80 constitute an HTH myb-type domain; sequence TDPKPRLRWT…HLQKFRLGKQ (61 aa). A DNA-binding region (H-T-H motif) is located at residues 51–76; sequence PKTIMRVMGVKGLTLYHLKSHLQKFR. A coiled coil region spans residues 119–139; it reads RNMNEMQMEVQRRIEEEVVIE.

It belongs to the MYB-CC family. In terms of tissue distribution, expressed in phloem and/or cambium.

The protein localises to the nucleus. The sequence is that of Myb family transcription factor PHL12 from Arabidopsis thaliana (Mouse-ear cress).